We begin with the raw amino-acid sequence, 109 residues long: Nucleoid-associated protein Plut_1285 (109 aa).

The protein belongs to the YbaB/EbfC family. In terms of assembly, homodimer.

The protein localises to the cytoplasm. It is found in the nucleoid. Its function is as follows. Binds to DNA and alters its conformation. May be involved in regulation of gene expression, nucleoid organization and DNA protection. The polypeptide is Nucleoid-associated protein Plut_1285 (Chlorobium luteolum (strain DSM 273 / BCRC 81028 / 2530) (Pelodictyon luteolum)).